The primary structure comprises 206 residues: dCTP deaminase, dUMP-forming (206 aa).

Residues 117-122, D135, 143-145, Q163, Y177, K184, and Q188 contribute to the dCTP site; these read RSSFGR and TLE. Catalysis depends on E145, which acts as the Proton donor/acceptor.

It belongs to the dCTP deaminase family. In terms of assembly, homotrimer.

It carries out the reaction dCTP + 2 H2O = dUMP + NH4(+) + diphosphate. The protein operates within pyrimidine metabolism; dUMP biosynthesis; dUMP from dCTP: step 1/1. In terms of biological role, bifunctional enzyme that catalyzes both the deamination of dCTP to dUTP and the hydrolysis of dUTP to dUMP without releasing the toxic dUTP intermediate. This is dCTP deaminase, dUMP-forming from Methanococcus vannielii (strain ATCC 35089 / DSM 1224 / JCM 13029 / OCM 148 / SB).